Here is a 257-residue protein sequence, read N- to C-terminus: Phosphonates import ATP-binding protein PhnC (257 aa).

An ABC transporter domain is found at Ile4–Leu248. Gly37–Ser44 is a binding site for ATP.

The protein belongs to the ABC transporter superfamily. Phosphonates importer (TC 3.A.1.9.1) family. In terms of assembly, the complex is composed of two ATP-binding proteins (PhnC), two transmembrane proteins (PhnE) and a solute-binding protein (PhnD).

It localises to the cell membrane. It carries out the reaction phosphonate(out) + ATP + H2O = phosphonate(in) + ADP + phosphate + H(+). Its function is as follows. Part of the ABC transporter complex PhnCDE involved in phosphonates import. Responsible for energy coupling to the transport system. The sequence is that of Phosphonates import ATP-binding protein PhnC from Staphylococcus haemolyticus (strain JCSC1435).